Consider the following 210-residue polypeptide: Glutathione S-transferase P 2 (210 aa).

The GST N-terminal domain maps to 1–82 (SGYTLTYFPL…LLARYGLSGS (82 aa)). Residues Tyr-7, Arg-13, Trp-38, Lys-46, 53-54 (QI), and 66-67 (QS) contribute to the glutathione site. The GST C-terminal domain occupies 83 to 204 (NEREIAINEM…KSEGRKRRPI (122 aa)).

Belongs to the GST superfamily. Pi family. Homodimer. In terms of tissue distribution, liver, kidney, muscle, skin, lung and ovary.

The catalysed reaction is RX + glutathione = an S-substituted glutathione + a halide anion + H(+). Its function is as follows. Conjugation of reduced glutathione to a wide number of exogenous and endogenous hydrophobic electrophiles. This is Glutathione S-transferase P 2 from Bufo bufo (European toad).